A 280-amino-acid polypeptide reads, in one-letter code: Probable formate transporter (280 aa).

6 consecutive transmembrane segments (helical) span residues 33 to 49, 67 to 83, 116 to 133, 177 to 195, 204 to 219, and 253 to 272; these read LSFV…LLAE, LVFG…VVIA, SWVF…VLAY, FWRA…YLAV, SFGI…CIGF, and LGNI…FTYL.

Belongs to the FNT transporter (TC 1.A.16) family.

The protein resides in the cell membrane. May act as a formate transporter. The protein is Probable formate transporter (fdhC) of Methanobacterium formicicum.